A 124-amino-acid polypeptide reads, in one-letter code: Small ribosomal subunit protein uS12 (124 aa).

Asp-89 carries the post-translational modification 3-methylthioaspartic acid. A disordered region spans residues 104–124 (SAGVQNRNRGRSKYGTKRPKK). Residues 111–124 (NRGRSKYGTKRPKK) show a composition bias toward basic residues.

This sequence belongs to the universal ribosomal protein uS12 family. In terms of assembly, part of the 30S ribosomal subunit. Contacts proteins S8 and S17. May interact with IF1 in the 30S initiation complex.

In terms of biological role, with S4 and S5 plays an important role in translational accuracy. Its function is as follows. Interacts with and stabilizes bases of the 16S rRNA that are involved in tRNA selection in the A site and with the mRNA backbone. Located at the interface of the 30S and 50S subunits, it traverses the body of the 30S subunit contacting proteins on the other side and probably holding the rRNA structure together. The combined cluster of proteins S8, S12 and S17 appears to hold together the shoulder and platform of the 30S subunit. The protein is Small ribosomal subunit protein uS12 of Pelotomaculum thermopropionicum (strain DSM 13744 / JCM 10971 / SI).